The sequence spans 106 residues: L-rhamnose mutarotase (106 aa).

A substrate-binding site is contributed by Y20. H24 functions as the Proton donor in the catalytic mechanism. Substrate is bound by residues Y43 and 78–79 (WW).

Belongs to the rhamnose mutarotase family. Homodimer.

Its subcellular location is the cytoplasm. It catalyses the reaction alpha-L-rhamnose = beta-L-rhamnose. The protein operates within carbohydrate metabolism; L-rhamnose metabolism. In terms of biological role, involved in the anomeric conversion of L-rhamnose. This chain is L-rhamnose mutarotase, found in Rhizobium etli (strain ATCC 51251 / DSM 11541 / JCM 21823 / NBRC 15573 / CFN 42).